A 241-amino-acid polypeptide reads, in one-letter code: Sugar fermentation stimulation protein homolog (241 aa).

It belongs to the SfsA family.

This chain is Sugar fermentation stimulation protein homolog, found in Thermosynechococcus vestitus (strain NIES-2133 / IAM M-273 / BP-1).